The sequence spans 117 residues: Immunoglobulin kappa variable 9-129 (117 aa).

The N-terminal stretch at 1–22 (MDMRAPAQVFGFLLLWFPGARC) is a signal peptide. The tract at residues 23–45 (DIQMTQSPSSLSASLGERVSLTC) is framework-1. A disulfide bond links C45 and C110. A complementarity-determining-1 region spans residues 46-56 (RASQDIHGYLN). Residues 57 to 71 (LFQQKPGETIKHLIY) are framework-2. The segment at 72 to 78 (ETSNLDS) is complementarity-determining-2. Positions 79 to 110 (GVPKRFSGSRSGSDYSLIIGSLESEDFADYYC) are framework-3. The segment at 111-117 (LQYASSP) is complementarity-determining-3.

The polypeptide is Immunoglobulin kappa variable 9-129 (Mus musculus (Mouse)).